The sequence spans 371 residues: Protein-glutamate methylesterase/protein-glutamine glutaminase 3 (371 aa).

Residues 5–120 (RVVVIDDSAY…SEEILTIRED (116 aa)) form the Response regulatory domain. A 4-aspartylphosphate modification is found at aspartate 56. Positions 174-362 (PAGRLEVVAI…LDRMSREIIQ (189 aa)) constitute a CheB-type methylesterase domain. Residues serine 186, histidine 213, and aspartate 309 contribute to the active site.

This sequence belongs to the CheB family. Post-translationally, phosphorylated by CheA. Phosphorylation of the N-terminal regulatory domain activates the methylesterase activity.

The protein resides in the cytoplasm. The catalysed reaction is [protein]-L-glutamate 5-O-methyl ester + H2O = L-glutamyl-[protein] + methanol + H(+). It catalyses the reaction L-glutaminyl-[protein] + H2O = L-glutamyl-[protein] + NH4(+). Involved in chemotaxis. Part of a chemotaxis signal transduction system that modulates chemotaxis in response to various stimuli. Catalyzes the demethylation of specific methylglutamate residues introduced into the chemoreceptors (methyl-accepting chemotaxis proteins or MCP) by CheR. Also mediates the irreversible deamidation of specific glutamine residues to glutamic acid. In Geobacter sulfurreducens (strain ATCC 51573 / DSM 12127 / PCA), this protein is Protein-glutamate methylesterase/protein-glutamine glutaminase 3.